A 377-amino-acid polypeptide reads, in one-letter code: Guanine nucleotide-binding protein subunit alpha-13 (377 aa).

2 S-palmitoyl cysteine lipidation sites follow: Cys-14 and Cys-18. Residues 47 to 377 (RLVKILLLGA…HDNLKQLMLQ (331 aa)) form the G-alpha domain. Residues 50-63 (KILLLGAGESGKST) are G1 motif. GTP is bound by residues 58–63 (ESGKST), Ser-173, and 197–200 (LLAR). Mg(2+) is bound at residue Ser-62. The G2 motif stretch occupies residues 195-203 (DILLARRPT). Thr-203 is a binding site for Mg(2+). Thr-203 carries the phosphothreonine modification. A G3 motif region spans residues 218-227 (FKMVDVGGQR). The G4 motif stretch occupies residues 287–294 (ILFLNKTD). GTP contacts are provided by residues 291-294 (NKTD) and Ala-349. Residues 347–352 (TTAINT) are G5 motif.

It belongs to the G-alpha family. G(12) subfamily. As to quaternary structure, g proteins are composed of 3 units; alpha, beta and gamma. The alpha chain contains the guanine nucleotide binding site. Interacts with UBXD5. Interacts with HAX1. Interacts (in GTP-bound form) with PPP5C (via TPR repeats); activates PPP5C phosphatase activity and translocates PPP5C to the cell membrane. Interacts with RGS22. Interacts (in GTP-bound form) with ARHGEF1. Interacts (in GTP-bound form) with ARHGEF11 (via RGS domain). Interacts (in GTP-bound form) with ARHGEF12 (via RGS domain). Interacts with CTNND1. Interacts with GAS2L2. Interacts with GPR35. Interacts with GPR174. Post-translationally, phosphorylation on Thr-203 destabilizes the heterotrimer of alpha, beta and gamma, and inhibits Rho activation. In terms of tissue distribution, expressed in brain and testis, as well as in kidney and sperm (at protein level).

The protein resides in the membrane. The protein localises to the melanosome. It is found in the cytoplasm. It localises to the nucleus. Guanine nucleotide-binding proteins (G proteins) are involved as modulators or transducers in various transmembrane signaling systems. Activates effector molecule RhoA by binding and activating RhoGEFs (ARHGEF1/p115RhoGEF, ARHGEF11/PDZ-RhoGEF and ARHGEF12/LARG). GNA13-dependent Rho signaling subsequently regulates transcription factor AP-1 (activating protein-1). Promotes tumor cell invasion and metastasis by activating Rho/ROCK signaling pathway. Inhibits CDH1-mediated cell adhesion in a process independent from Rho activation. In lymphoid follicles, transmits P2RY8- and S1PR2-dependent signals that lead to inhibition of germinal center (GC) B cell growth and migration outside the GC niche. In Mus musculus (Mouse), this protein is Guanine nucleotide-binding protein subunit alpha-13 (Gna13).